The following is a 40-amino-acid chain: Biotin carboxylase (40 aa).

A Biotin carboxylation domain is found at 1–40; that stretch reads ILVANRGEIAVRLLEEAPSPALTPELRITAYLPSGGPFVR. In terms of domain architecture, ATP-grasp spans 13-27; that stretch reads LLEEAPSPALTPELR.

Acetyl-CoA carboxylase is a heterohexamer of biotin carboxyl carrier protein, biotin carboxylase and the two subunits of carboxyl transferase in a 2:2 complex. It depends on Mg(2+) as a cofactor. Mn(2+) serves as cofactor.

The enzyme catalyses N(6)-biotinyl-L-lysyl-[protein] + hydrogencarbonate + ATP = N(6)-carboxybiotinyl-L-lysyl-[protein] + ADP + phosphate + H(+). Its pathway is lipid metabolism; malonyl-CoA biosynthesis; malonyl-CoA from acetyl-CoA: step 1/1. In terms of biological role, this protein is a component of the acetyl coenzyme A carboxylase complex; first, biotin carboxylase catalyzes the carboxylation of the carrier protein and then the transcarboxylase transfers the carboxyl group to form malonyl-CoA. This Populus euphratica (Euphrates poplar) protein is Biotin carboxylase.